The following is a 1147-amino-acid chain: ATP-dependent helicase/deoxyribonuclease subunit B (1147 aa).

ATP is bound at residue Gly8–Ser15. Cys780, Cys1092, Cys1095, and Cys1101 together coordinate [4Fe-4S] cluster.

Belongs to the helicase family. AddB/RexB type 1 subfamily. In terms of assembly, heterodimer of AddA and AddB. It depends on Mg(2+) as a cofactor. [4Fe-4S] cluster is required as a cofactor.

The heterodimer acts as both an ATP-dependent DNA helicase and an ATP-dependent, dual-direction single-stranded exonuclease. Recognizes the chi site generating a DNA molecule suitable for the initiation of homologous recombination. The AddB subunit has 5' -&gt; 3' nuclease activity but not helicase activity. The sequence is that of ATP-dependent helicase/deoxyribonuclease subunit B from Lachnoclostridium phytofermentans (strain ATCC 700394 / DSM 18823 / ISDg) (Clostridium phytofermentans).